Here is a 369-residue protein sequence, read N- to C-terminus: Glycine oxidase (369 aa).

FAD is bound by residues isoleucine 14–isoleucine 15, glutamate 34–serine 35, threonine 42–threonine 43, alanine 47–methionine 49, and valine 174. Arginine 302 and arginine 329 together coordinate substrate. Histidine 327–leucine 333 lines the FAD pocket.

Belongs to the DAO family. ThiO subfamily. In terms of assembly, homotetramer. It depends on FAD as a cofactor.

It is found in the cytoplasm. It catalyses the reaction glycine + O2 + H2O = glyoxylate + H2O2 + NH4(+). The catalysed reaction is N-ethylglycine + O2 + H2O = ethylamine + glyoxylate + H2O2. The enzyme catalyses sarcosine + O2 + H2O = methylamine + glyoxylate + H2O2. It carries out the reaction D-alanine + O2 + H2O = pyruvate + H2O2 + NH4(+). It catalyses the reaction glyphosate + O2 + H2O = aminomethylphosphonate + glyoxylate + H2O2 + H(+). It participates in cofactor biosynthesis; thiamine diphosphate biosynthesis. Is competitively inhibited by glycolate. Functionally, catalyzes the FAD-dependent oxidative deamination of various amines and D-amino acids to yield the corresponding alpha-keto acids, ammonia/amine, and hydrogen peroxide. Oxidizes sarcosine (N-methylglycine), N-ethylglycine and glycine. Can also oxidize the herbicide glyphosate (N-phosphonomethylglycine). Displays lower activities on D-alanine, D-valine, D-proline and D-methionine. Does not act on L-amino acids and other D-amino acids. Is essential for thiamine biosynthesis since the oxidation of glycine catalyzed by ThiO generates the glycine imine intermediate (dehydroglycine) required for the biosynthesis of the thiazole ring of thiamine pyrophosphate. The protein is Glycine oxidase of Bacillus subtilis (strain 168).